The sequence spans 500 residues: Plexin domain-containing protein 1 (500 aa).

The signal sequence occupies residues 1 to 18 (MRGELWLLVLVLREAARA). Topologically, residues 19–426 (LSPQPGAGHD…TKGTPVHLGT (408 aa)) are extracellular. Disordered regions lie at residues 20 to 39 (SPQP…AAKG) and 46 to 78 (RRAR…DTLP). O-linked (Xyl...) (chondroitin sulfate) serine glycosylation occurs at Ser33. A compositionally biased stretch (basic and acidic residues) spans 47–60 (RARESPGHVSEPDR). 2 N-linked (GlcNAc...) asparagine glycosylation sites follow: Asn80 and Asn197. Residues 359–379 (FQDEDHDSASPDTSFSPYDGD) are disordered. Residues 368–379 (SPDTSFSPYDGD) are compositionally biased toward polar residues. The helical transmembrane segment at 427 to 447 (IVGIVLAVLLVAAIILAGIYI) threads the bilayer. At 448–500 (NGHPTSNAALFFIERRPHHWPAMKFRSHPDHSTYAEVEPSGHEKEGFMEAEQC) the chain is on the cytoplasmic side. The span at 479–494 (STYAEVEPSGHEKEGF) shows a compositional bias: basic and acidic residues. Residues 479-500 (STYAEVEPSGHEKEGFMEAEQC) are disordered.

The protein belongs to the plexin family. As to quaternary structure, interacts with NID1. May interact with CTTN. In terms of processing, N-glycosylated. In terms of tissue distribution, detected in urine (at protein level). Detected in endothelial cells from colorectal cancer, and in endothelial cells from primary cancers of the lung, liver, pancreas, breast and brain. Not detectable in endothelial cells from normal tissue. Expressed in fibrovascular membrane with increased expression in individuals with proliferative diabetic retinopathy.

Its subcellular location is the secreted. The protein localises to the cell membrane. The protein resides in the cell junction. It is found in the tight junction. It localises to the cytoplasm. Plays a critical role in endothelial cell capillary morphogenesis. This Homo sapiens (Human) protein is Plexin domain-containing protein 1 (PLXDC1).